A 166-amino-acid chain; its full sequence is Ribosome maturation factor RimM (166 aa).

One can recognise a PRC barrel domain in the interval 94–166 (EGEYYHADLI…IVIEAAYADQ (73 aa)).

Belongs to the RimM family. Binds ribosomal protein uS19.

The protein resides in the cytoplasm. Its function is as follows. An accessory protein needed during the final step in the assembly of 30S ribosomal subunit, possibly for assembly of the head region. Essential for efficient processing of 16S rRNA. May be needed both before and after RbfA during the maturation of 16S rRNA. It has affinity for free ribosomal 30S subunits but not for 70S ribosomes. This is Ribosome maturation factor RimM from Novosphingobium aromaticivorans (strain ATCC 700278 / DSM 12444 / CCUG 56034 / CIP 105152 / NBRC 16084 / F199).